The following is a 391-amino-acid chain: 1-acyl-sn-glycerol-3-phosphate acyltransferase 2 (391 aa).

A helical transmembrane segment spans residues 3–23 (MAAAAVIVPLGILFFISGLVV). Residues 92 to 97 (HRSDID) carry the HXXXXD motif motif. A run of 2 helical transmembrane segments spans residues 306 to 326 (LAVV…FLHW) and 334 to 354 (KGIA…QILI). Positions 358 to 391 (QSERSTPAKVAPAKPKDKHQSGSSSQTEVEEKQK) are disordered.

This sequence belongs to the 1-acyl-sn-glycerol-3-phosphate acyltransferase family.

The protein localises to the endoplasmic reticulum membrane. The catalysed reaction is a 1-acyl-sn-glycero-3-phosphate + an acyl-CoA = a 1,2-diacyl-sn-glycero-3-phosphate + CoA. It functions in the pathway phospholipid metabolism; CDP-diacylglycerol biosynthesis; CDP-diacylglycerol from sn-glycerol 3-phosphate: step 2/3. Converts lysophosphatidic acid (LPA) into phosphatidic acid by incorporating acyl moiety at the 2 position. This Brassica oleracea (Wild cabbage) protein is 1-acyl-sn-glycerol-3-phosphate acyltransferase 2 (LPAT2).